Reading from the N-terminus, the 88-residue chain is Small ribosomal subunit protein bS16 (88 aa).

The protein belongs to the bacterial ribosomal protein bS16 family.

This Symbiobacterium thermophilum (strain DSM 24528 / JCM 14929 / IAM 14863 / T) protein is Small ribosomal subunit protein bS16.